Reading from the N-terminus, the 446-residue chain is Trigger factor (446 aa).

Residues 161–246 (GDRLTIDFKG…VSKVERSELP (86 aa)) form the PPIase FKBP-type domain. Residues 422–446 (VSYEDAVKPRTAPAEQAEDGEQSAE) are disordered. Residues 437 to 446 (QAEDGEQSAE) show a composition bias toward acidic residues.

This sequence belongs to the FKBP-type PPIase family. Tig subfamily.

The protein localises to the cytoplasm. The catalysed reaction is [protein]-peptidylproline (omega=180) = [protein]-peptidylproline (omega=0). Involved in protein export. Acts as a chaperone by maintaining the newly synthesized protein in an open conformation. Functions as a peptidyl-prolyl cis-trans isomerase. This Hahella chejuensis (strain KCTC 2396) protein is Trigger factor.